The primary structure comprises 784 residues: Cell wall protein Lmo0130 (784 aa).

The N-terminal stretch at 1–34 is a signal peptide; that stretch reads MKVNKFFKKTTHVLLVAGLTIGLTAPFTGTTAQA. The tract at residues 690 to 761 is disordered; sequence ATTPPDNGNG…NTSLPTTGDT (72 aa). Residues 697–729 are compositionally biased toward gly residues; the sequence is GNGGTDNGNGNGNNGGTDGNGGTNNGNGSGTNG. The segment covering 730 to 759 has biased composition (low complexity); the sequence is GTTTTEDPTTTTSNTSTTGTSSNTSLPTTG. The LPXTG sorting signal signature appears at 755–759; sequence LPTTG. Residue threonine 758 is modified to Pentaglycyl murein peptidoglycan amidated threonine. A propeptide spans 759–784 (removed by sortase A); the sequence is GDTAGLATVFGVILTTTALYVLRKRS.

The protein localises to the secreted. The protein resides in the cell wall. This chain is Cell wall protein Lmo0130, found in Listeria monocytogenes serovar 1/2a (strain ATCC BAA-679 / EGD-e).